Consider the following 322-residue polypeptide: MRRILNKESDRFTLYPILYPDVFPFYKKAEACFWTAEEIDYSSDLKDFEKLNENEKHFIKHVLAFFAASDGIVLENLAVSFLREVQITEAKKFYSFQIAVENIHSETYSLLIDNYIKDEKERLNLFHAIENIPAVKNKALWAAKWINDTNSFAERIVANACVEGILFSGSFCAIFWFKKQNKLHGLTFSNELISRDEGLHTDFNCLIYSLLDNKLPEQMVQNIVKEAGGVEVEKSFICESLPCDLIGMNSRLMSQYIEFVADRLLECLGCSKIFHSKNPFNWMDLISLQGKTNFFEKRVADYQKSGVMAQRKDHVFCLNTEF.

Residues D70, E101, and H104 each contribute to the Fe cation site. Y108 is an active-site residue. Residues E163, E197, and H200 each contribute to the Fe cation site.

This sequence belongs to the ribonucleoside diphosphate reductase small chain family. As to quaternary structure, heterodimer of a large and a small subunit. It depends on Fe cation as a cofactor.

It carries out the reaction a 2'-deoxyribonucleoside 5'-diphosphate + [thioredoxin]-disulfide + H2O = a ribonucleoside 5'-diphosphate + [thioredoxin]-dithiol. Functionally, provides the precursors necessary for DNA synthesis. Catalyzes the biosynthesis of deoxyribonucleotides from the corresponding ribonucleotides. In Plasmodium falciparum (isolate FCR-3 / Gambia), this protein is Ribonucleoside-diphosphate reductase small subunit (RNR2).